The sequence spans 206 residues: GTP-binding protein YPT1 (206 aa).

Met1 is modified (N-acetylmethionine). Residues 17 to 23 (SGVGKSC), 33 to 40 (YTNDYIST), Gly66, and 121 to 124 (NKCD) contribute to the GTP site. The S-palmitoyl cysteine moiety is linked to residue Cys23. Residues 37–45 (YISTIGVDF) carry the Effector region motif. The segment at 63–80 (DTAGQERFRTITSSYYRG) is interaction with GDI1. Cys123 carries the S-palmitoyl cysteine lipid modification. Lys144 participates in a covalent cross-link: Glycyl lysine isopeptide (Lys-Gly) (interchain with G-Cter in ubiquitin). A GTP-binding site is contributed by 152–153 (AL). Phosphoserine is present on residues Ser172 and Ser174. Positions 173–206 (MSQQNLNETTQKKEDKGNVNLKGQSLTNTGGGCC) are disordered. Positions 189 to 195 (GNVNLKG) are interaction with GDI1. Residues Cys205 and Cys206 are each lipidated (S-geranylgeranyl cysteine).

Belongs to the small GTPase superfamily. Rab family. In terms of assembly, forms a complex with the Rab escort protein (REP) MRS6, which is recognized by Rab geranylgeranyltransferase BET2-BET4. Interacts with the Rab GDP dissociation inhibitor GDI1, which can retrieve from and deliver to membranes the GDP-bound and prenylated form of YPT1. Interacts with YIP1, which is required for proper membrane targeting of prenylated YPT1. Interacts with YIF1, YIP3, YIP4 and YIP5. In terms of processing, prenylation is required for interaction with GDI1 and YIP1.

The protein resides in the endoplasmic reticulum membrane. It localises to the golgi apparatus membrane. The protein localises to the cytoplasm. It is found in the preautophagosomal structure membrane. Rab activation is generally mediated by a guanine exchange factor (GEF), while inactivation through hydrolysis of bound GTP is catalyzed by a GTPase activating protein (GAP). YPT1 is activated by the GEFs DSS4 and TRAPP complex, and inactivated by GAPs GYP1, GYP5 and GYP8. Its function is as follows. The small GTPases Rab are key regulators of intracellular membrane trafficking, from the formation of transport vesicles to their fusion with membranes. Rabs cycle between an inactive GDP-bound form and an active GTP-bound form that is able to recruit to membranes different set of downstream effectors directly responsible for vesicle formation, movement, tethering and fusion. YPT1 regulates the trafficking of secretory vesicles from the endoplasmic reticulum (ER) to the Golgi. Vesicular transport depends on shuttling of YPT1 between membrane and cytosol by GDI1, probably by recycling it to its membrane of origin after a vesicle fusion event. Plays a role in the initial events of the autophagic vacuole development which take place at specialized regions of the endoplasmic reticulum. Also involved in the recycling of membrane proteins. The sequence is that of GTP-binding protein YPT1 (YPT1) from Saccharomyces cerevisiae (strain ATCC 204508 / S288c) (Baker's yeast).